Here is a 20-residue protein sequence, read N- to C-terminus: VIGGDECNINEHPFLVLVYY.

Residues 1-20 (VIGGDECNINEHPFLVLVYY) form the Peptidase S1 domain.

The protein belongs to the peptidase S1 family. Snake venom subfamily. Monomer. Expressed by the venom gland.

Its subcellular location is the secreted. Inhibited by PMSF and soybean trypsin inhibitor. Partially inhibited by DTT and cysteine. Not affected by EDTA. Functionally, fibrin(ogen)olytic serine protease degrades Bbeta-chain of human fibrinogen (FGB) and shows a lower activity on Aa-chain (FGA). Also degrades fibrin directly. Releases fibrinopeptide B and a small amount of fibrinopeptide A. Has also be shown to catalyze the hydrolysis of some chromogenic substrates such as S2238, S2160, S2302 and S2251. This chain is Beta-fibrinogenase jerdofibrase, found in Protobothrops jerdonii (Jerdon's pitviper).